The primary structure comprises 183 residues: Dual-action ribosomal maturation protein DarP (183 aa).

The protein belongs to the DarP family.

The protein localises to the cytoplasm. Its function is as follows. Member of a network of 50S ribosomal subunit biogenesis factors which assembles along the 30S-50S interface, preventing incorrect 23S rRNA structures from forming. Promotes peptidyl transferase center (PTC) maturation. The sequence is that of Dual-action ribosomal maturation protein DarP from Escherichia coli O6:H1 (strain CFT073 / ATCC 700928 / UPEC).